The primary structure comprises 115 residues: T cell receptor beta variable 11-2 (115 aa).

Residues 1 to 21 form the signal peptide; it reads MGTRLLCWAALCLLGAELTEA. An Ig-like domain is found at 22–115; that stretch reads GVAQSPRYKI…SAVYLCASSL (94 aa). An intrachain disulfide couples C42 to C111.

As to quaternary structure, alpha-beta TR is a heterodimer composed of an alpha and beta chain; disulfide-linked. The alpha-beta TR is associated with the transmembrane signaling CD3 coreceptor proteins to form the TR-CD3 (TcR or TCR). The assembly of alpha-beta TR heterodimers with CD3 occurs in the endoplasmic reticulum where a single alpha-beta TR heterodimer associates with one CD3D-CD3E heterodimer, one CD3G-CD3E heterodimer and one CD247 homodimer forming a stable octameric structure. CD3D-CD3E and CD3G-CD3E heterodimers preferentially associate with TR alpha and TR beta chains, respectively. The association of the CD247 homodimer is the last step of TcR assembly in the endoplasmic reticulum and is required for transport to the cell surface.

The protein localises to the cell membrane. Its function is as follows. V region of the variable domain of T cell receptor (TR) beta chain that participates in the antigen recognition. Alpha-beta T cell receptors are antigen specific receptors which are essential to the immune response and are present on the cell surface of T lymphocytes. Recognize peptide-major histocompatibility (MH) (pMH) complexes that are displayed by antigen presenting cells (APC), a prerequisite for efficient T cell adaptive immunity against pathogens. Binding of alpha-beta TR to pMH complex initiates TR-CD3 clustering on the cell surface and intracellular activation of LCK that phosphorylates the ITAM motifs of CD3G, CD3D, CD3E and CD247 enabling the recruitment of ZAP70. In turn ZAP70 phosphorylates LAT, which recruits numerous signaling molecules to form the LAT signalosome. The LAT signalosome propagates signal branching to three major signaling pathways, the calcium, the mitogen-activated protein kinase (MAPK) kinase and the nuclear factor NF-kappa-B (NF-kB) pathways, leading to the mobilization of transcription factors that are critical for gene expression and essential for T cell growth and differentiation. The T cell repertoire is generated in the thymus, by V-(D)-J rearrangement. This repertoire is then shaped by intrathymic selection events to generate a peripheral T cell pool of self-MH restricted, non-autoaggressive T cells. Post-thymic interaction of alpha-beta TR with the pMH complexes shapes TR structural and functional avidity. This Homo sapiens (Human) protein is T cell receptor beta variable 11-2.